The sequence spans 409 residues: Peptidase T (409 aa).

Histidine 78 lines the Zn(2+) pocket. Aspartate 80 is a catalytic residue. Aspartate 140 provides a ligand contact to Zn(2+). The active-site Proton acceptor is the glutamate 174. Residues glutamate 175, aspartate 197, and histidine 379 each contribute to the Zn(2+) site.

Belongs to the peptidase M20B family. It depends on Zn(2+) as a cofactor.

The protein resides in the cytoplasm. The catalysed reaction is Release of the N-terminal residue from a tripeptide.. Its function is as follows. Cleaves the N-terminal amino acid of tripeptides. In Photobacterium profundum (strain SS9), this protein is Peptidase T.